A 726-amino-acid polypeptide reads, in one-letter code: Transcription factor 12 (726 aa).

Disordered regions lie at residues 27 to 75 (SPPV…SRGF), 89 to 223 (LVSH…TFFD), 243 to 267 (YGGMLGGSSSHMPQSGNYSNLHSHD), 289 to 309 (SSFHRSSASTSPFVTASHTPP), 345 to 367 (PDHTSSSFPSNPSTPVGSPSPLA), 380 to 409 (TASGPAGRAGTTQWTRATGQAPSSPSYENS), 501 to 532 (MGSVHREESGSLNNNNHSALQASAAPTSSSEL), 558 to 624 (VENQ…ERRM), and 694 to 726 (EEEKVSGVSGDPQQAHPAVHPGLTDTSNPMGHL). The span at 29–47 (PVNSGKNRPTTLGSSQFTA) shows a compositional bias: polar residues. The segment covering 55 to 74 (SQASWASGGQSSPSFESSRG) has biased composition (low complexity). Polar residues-rich tracts occupy residues 145–157 (PGKSPTPFYSYTG), 249–263 (GSSSHMPQSGNYSNL), and 291–309 (FHRSSASTSPFVTASHTPP). Residues 348–359 (TSSSFPSNPSTP) show a composition bias toward low complexity. Composition is skewed to polar residues over residues 389–409 (GTTQWTRATGQAPSSPSYENS) and 510–532 (GSLNNNNHSALQASAAPTSSSEL). The span at 559–575 (ENQDKDDMHDSHASDDL) shows a compositional bias: basic and acidic residues. Residues 592–603 (SSRPSCELSCSS) show a composition bias toward low complexity. A compositionally biased stretch (basic and acidic residues) spans 612–624 (PEQKAERERERRM). The region spanning 621–674 (ERRMANNARERLRVRDINEAFKELGRMCQLHLKSEKPQTKLLILHQAVAVILSL) is the bHLH domain. A class A specific domain region spans residues 676 to 699 (QQVRERNLNPKAACLKRREEEKVS). Residues 717–726 (TDTSNPMGHL) show a composition bias toward polar residues.

In terms of assembly, efficient DNA binding requires dimerization with another bHLH protein.

It is found in the nucleus. In terms of biological role, transcriptional regulator. Involved in the initiation of neuronal differentiation. Activates transcription by binding to the E box (5'-CANNTG-3'). May be involved in the functional network that regulates the development of the GnRH axis. This chain is Transcription factor 12 (tcf12), found in Danio rerio (Zebrafish).